The primary structure comprises 123 residues: Large ribosomal subunit protein uL29 (123 aa).

Residues 84 to 123 (RPKKTRAMRRRLNKHEEGLKTKKQQRKERLYPPRKYAVKA) form a disordered region. Residues 86–96 (KKTRAMRRRLN) are compositionally biased toward basic residues.

The protein belongs to the universal ribosomal protein uL29 family. As to quaternary structure, component of the large ribosomal subunit.

It is found in the cytoplasm. Functionally, component of the large ribosomal subunit. The ribosome is a large ribonucleoprotein complex responsible for the synthesis of proteins in the cell. This Ophiophagus hannah (King cobra) protein is Large ribosomal subunit protein uL29 (RPL35).